Reading from the N-terminus, the 243-residue chain is Ornithine decarboxylase antizyme 3 (243 aa).

Phosphoserine is present on residues Ser6, Ser9, and Ser12.

It belongs to the ODC antizyme family. In terms of assembly, interacts with ODC1 and thereby sterically blocks ODC homodimerization. Interacts with AZIN2; this interaction disrupts the interaction between the antizyme and ODC1. Interacts with GGN. As to expression, testis specific. Expressed throughout the differentiation process from spermatids to spermatozoa in the inner part of the seminiferous tubules.

It is found in the nucleus. The protein localises to the cytoplasm. Functionally, ornithine decarboxylase (ODC) antizyme protein that negatively regulates ODC activity and intracellular polyamine biosynthesis and uptake in response to increased intracellular polyamine levels. Binds to ODC monomers, inhibiting the assembly of the functional ODC homodimers. Does not target the ODC monomers for degradation, which allows a protein synthesis-independent restoration of ODC activity. Stabilizes AZIN2 by interfering with its ubiquitination. Involved in the translocation of AZNI2 from ER-Golgi intermediate compartment (ERGIC) to the cytosol. Probably plays a key role in spermatogenesis by regulating the intracellular concentration of polyamines in haploid germ cells. The sequence is that of Ornithine decarboxylase antizyme 3 (Oaz3) from Mus musculus (Mouse).